Consider the following 360-residue polypeptide: D-alanine--D-alanine ligase (360 aa).

The ATP-grasp domain maps to 146–352; sequence KLCVADAGIA…FPELAERLLQ (207 aa). 179–234 provides a ligand contact to ATP; that stretch reads EEKFIYPFFVKPANLGSSIGISKVHHREQLPAALKSACSLDSKIVVEKAITGREIE. Aspartate 305, glutamate 319, and asparagine 321 together coordinate Mg(2+).

It belongs to the D-alanine--D-alanine ligase family. The cofactor is Mg(2+). Mn(2+) is required as a cofactor.

It localises to the cytoplasm. The catalysed reaction is 2 D-alanine + ATP = D-alanyl-D-alanine + ADP + phosphate + H(+). The protein operates within cell wall biogenesis; peptidoglycan biosynthesis. Functionally, cell wall formation. The chain is D-alanine--D-alanine ligase from Pelodictyon phaeoclathratiforme (strain DSM 5477 / BU-1).